The following is a 292-amino-acid chain: Ribonuclease HIII (292 aa).

Residues 76–292 (TNLIGTDEVG…TQKAMKIAQL (217 aa)) form the RNase H type-2 domain. Residues D82, E83, and D186 each coordinate a divalent metal cation.

It belongs to the RNase HII family. RnhC subfamily. Mn(2+) serves as cofactor. Requires Mg(2+) as cofactor.

It localises to the cytoplasm. It carries out the reaction Endonucleolytic cleavage to 5'-phosphomonoester.. Its function is as follows. Endonuclease that specifically degrades the RNA of RNA-DNA hybrids. The chain is Ribonuclease HIII from Lactococcus lactis subsp. cremoris (strain SK11).